The following is a 219-amino-acid chain: Redox-sensing transcriptional repressor Rex (219 aa).

Positions 17-56 form a DNA-binding region, H-T-H motif; it reads LYYRIFKRFHRENIVKTSSKQIAEAIGIDPATVRRDFSYF. NAD(+) is bound at residue 91–96; sequence GVGNIG.

It belongs to the transcriptional regulatory Rex family. As to quaternary structure, homodimer.

It localises to the cytoplasm. Functionally, modulates transcription in response to changes in cellular NADH/NAD(+) redox state. This Streptococcus thermophilus (strain ATCC BAA-491 / LMD-9) protein is Redox-sensing transcriptional repressor Rex.